The sequence spans 198 residues: Large ribosomal subunit protein bL27c (198 aa).

The transit peptide at 1–58 (MAMATSMSLNLIGAFKGLSLSSTSSFLRGDLSFSPKTSFTVTLPLENLQAPIPLTIES) directs the protein to the chloroplast.

The protein belongs to the bacterial ribosomal protein bL27 family. In terms of assembly, part of the 50S ribosomal subunit.

It localises to the plastid. It is found in the chloroplast. This Arabidopsis thaliana (Mouse-ear cress) protein is Large ribosomal subunit protein bL27c (RPL27).